Reading from the N-terminus, the 509-residue chain is Pentatricopeptide repeat-containing protein At2g13420, mitochondrial (509 aa).

A mitochondrion-targeting transit peptide spans 1-19; sequence MLLLKQISPPFHLHQLRRR. PPR repeat units follow at residues 172–202, 206–240, 241–285, 286–320, 321–355, 356–390, 391–425, and 426–460; these read RLVE…RKEE, DEKV…GIEP, NVVT…GIEP, DVTS…GISP, TIET…GISP, SSAT…LCKP, STQT…ETGP, and DLDS…GFLP.

Belongs to the PPR family. P subfamily.

The protein resides in the mitochondrion. This Arabidopsis thaliana (Mouse-ear cress) protein is Pentatricopeptide repeat-containing protein At2g13420, mitochondrial.